We begin with the raw amino-acid sequence, 609 residues long: UvrABC system protein C (609 aa).

The GIY-YIG domain occupies 16-94 (HLPGVYRHLD…IKSLRPRYNI (79 aa)). Positions 203-238 (REVMDEIEARMLQASTELRFEEAAVLRDQMGSLSKV) constitute a UVR domain.

Belongs to the UvrC family. As to quaternary structure, interacts with UvrB in an incision complex.

The protein localises to the cytoplasm. Functionally, the UvrABC repair system catalyzes the recognition and processing of DNA lesions. UvrC both incises the 5' and 3' sides of the lesion. The N-terminal half is responsible for the 3' incision and the C-terminal half is responsible for the 5' incision. The sequence is that of UvrABC system protein C from Bordetella pertussis (strain Tohama I / ATCC BAA-589 / NCTC 13251).